The primary structure comprises 1712 residues: Gag-Pol polyprotein (1712 aa).

The N-myristoyl glycine; by host moiety is linked to residue Gly2. Disordered regions lie at residues 97–208 (VRPF…NRPQ), 416–440 (RETP…RHKE), and 487–518 (DCPK…PPEP). Residues 100–119 (FLPPPKPPTPLPQPLSPQPS) are compositionally biased toward pro residues. The PTAP/PSAP motif motif lies at 107-110 (PTPL). Residues 120–132 (APLTSSLYPVLPK) are compositionally biased toward low complexity. The LYPX(n)L motif motif lies at 126–130 (LYPVL). Pro residues-rich tracts occupy residues 136-146 (PKPPVLPPDPS) and 156-171 (EPPP…PSGP). Residues 157-160 (PPPY) carry the PPXY motif motif. The span at 416-434 (RETPEEREERLWQRQEERD) shows a compositional bias: basic and acidic residues. A CCHC-type zinc finger spans residues 473–490 (DQCAYCKEKGHWVRDCPK). Residues 497-512 (ANSTLLNLGDQESQGQ) show a composition bias toward polar residues. The region spanning 529 to 599 (VTFLVDTGAQ…CPYPLLGRDL (71 aa)) is the Peptidase A2 domain. The active-site Protease; shared with dimeric partner is the Asp534. The Reverse transcriptase domain occupies 708 to 899 (LDQGILKPCQ…QEVTYLGYSL (192 aa)). Positions 776, 850, 851, 1150, 1188, 1209, and 1279 each coordinate Mg(2+). The region spanning 1141 to 1287 (PDADLTWYTD…ADDTAKKAAT (147 aa)) is the RNase H type-1 domain. Residues 1262–1289 (PGHQKGDSPQAKGNRLADDTAKKAATET) form a disordered region. A compositionally biased stretch (basic and acidic residues) spans 1276-1287 (RLADDTAKKAAT). The HHCC-type zinc finger occupies 1354-1394 (HKLTHLSARKMKTLLEREETGFYLPNRDLHLRQVTESCRAC). One can recognise an Integrase catalytic domain in the interval 1411–1569 (RGRRPGTHWE…TPFEILYGAP (159 aa)). The Mg(2+) site is built by Asp1422 and Asp1481. Residues 1676–1703 (GPTTNQDLSDSPSSDDPSRWKVQRTQNP) are disordered.

Belongs to the retroviral Pol polyprotein family. As to quaternary structure, homohexamer; further associates as homomultimer. The virus core is composed of a lattice formed from hexagonal rings, each containing six capsid monomers. Interacts (via PPXY motif) with host NEDD4. Interacts (via PSAP motif) with host TSG101. Interacts (via LYPX(n)L motif) with host PDCD6IP. In terms of assembly, the reverse transcriptase is a monomer (Potential). Interacts (via RNase domains) with host release factor ETF1; this interaction is essential for translational readthrough of amber codon between viral gag and pol genes, as well as for viral replication. As to quaternary structure, homodimer. The cofactor is Mg(2+). In terms of processing, specific enzymatic cleavages by the viral protease yield mature proteins. The protease is released by autocatalytic cleavage. The polyprotein is cleaved during and after budding, this process is termed maturation. Post-translationally, phosphorylated on serine residues.

It localises to the virion. The protein resides in the host cell membrane. Its subcellular location is the host late endosome membrane. The protein localises to the host endosome. It is found in the host multivesicular body. It localises to the host cytoplasm. The catalysed reaction is DNA(n) + a 2'-deoxyribonucleoside 5'-triphosphate = DNA(n+1) + diphosphate. The enzyme catalyses Endonucleolytic cleavage to 5'-phosphomonoester.. Its activity is regulated as follows. Most efficiently inhibited by Amprenavir, which is able to block Gag-Pol processing in infected cells. Functionally, plays a role in budding and is processed by the viral protease during virion maturation outside the cell. During budding, it recruits, in a PPXY-dependent or independent manner, Nedd4-like ubiquitin ligases that conjugate ubiquitin molecules to Gag-Pol, or to Gag-Pol binding host factors. Interaction with HECT ubiquitin ligases probably links the viral protein to the host ESCRT pathway and facilitates release. Its function is as follows. Targets Gag and gag-pol polyproteins to the plasma membrane via a multipartite membrane binding signal, that includes its myristoylated N-terminus. Also mediates nuclear localization of the pre-integration complex. Constituent of the pre-integration complex (PIC) which tethers the latter to mitotic chromosomes. This allows the integration of the viral genome into the host DNA. In terms of biological role, forms the spherical core of the virion that encapsulates the genomic RNA-nucleocapsid complex. Functionally, involved in the packaging and encapsidation of two copies of the genome. Binds with high affinity to conserved UCUG elements within the packaging signal, located near the 5'-end of the genome. This binding is dependent on genome dimerization. Acts as a nucleic acid chaperone which is involved in rearrangement of nucleic acid secondary structures during gRNA retrotranscription. Its function is as follows. The aspartyl protease mediates proteolytic cleavages of Gag and Gag-Pol polyproteins during or shortly after the release of the virion from the plasma membrane. Cleavages take place as an ordered, step-wise cascade to yield mature proteins. This process is called maturation. Displays maximal activity during the budding process just prior to particle release from the cell. RT is a multifunctional enzyme that converts the viral dimeric RNA genome into dsDNA in the cytoplasm, shortly after virus entry into the cell. This enzyme displays a DNA polymerase activity that can copy either DNA or RNA templates, and a ribonuclease H (RNase H) activity that cleaves the RNA strand of RNA-DNA heteroduplexes in a partially processive 3' to 5' endonucleasic mode. Conversion of viral genomic RNA into dsDNA requires many steps. A tRNA binds to the primer-binding site (PBS) situated at the 5' end of the viral RNA. RT uses the 3' end of the tRNA primer to perform a short round of RNA-dependent minus-strand DNA synthesis. The reading proceeds through the U5 region and ends after the repeated (R) region which is present at both ends of viral RNA. The portion of the RNA-DNA heteroduplex is digested by the RNase H, resulting in a ssDNA product attached to the tRNA primer. This ssDNA/tRNA hybridizes with the identical R region situated at the 3' end of viral RNA. This template exchange, known as minus-strand DNA strong stop transfer, can be either intra- or intermolecular. RT uses the 3' end of this newly synthesized short ssDNA to perform the RNA-dependent minus-strand DNA synthesis of the whole template. RNase H digests the RNA template except for a polypurine tract (PPT) situated at the 5' end of the genome. It is not clear if both polymerase and RNase H activities are simultaneous. RNase H probably can proceed both in a polymerase-dependent (RNA cut into small fragments by the same RT performing DNA synthesis) and a polymerase-independent mode (cleavage of remaining RNA fragments by free RTs). Secondly, RT performs DNA-directed plus-strand DNA synthesis using the PPT that has not been removed by RNase H as primers. PPT and tRNA primers are then removed by RNase H. The 3' and 5' ssDNA PBS regions hybridize to form a circular dsDNA intermediate. Strand displacement synthesis by RT to the PBS and PPT ends produces a blunt ended, linear dsDNA copy of the viral genome that includes long terminal repeats (LTRs) at both ends. In terms of biological role, catalyzes viral DNA integration into the host chromosome, by performing a series of DNA cutting and joining reactions. This enzyme activity takes place after virion entry into a cell and reverse transcription of the RNA genome in dsDNA. The first step in the integration process is 3' processing. This step requires a complex comprising the viral genome, matrix protein and integrase. This complex is called the pre-integration complex (PIC). The integrase protein removes 2 nucleotides from each 3' end of the viral DNA, leaving recessed CA OH's at the 3' ends. In the second step that requires cell division, the PIC enters cell nucleus. In the third step, termed strand transfer, the integrase protein joins the previously processed 3' ends to the 5' ends of strands of target cellular DNA at the site of integration. The last step is viral DNA integration into host chromosome. The protein is Gag-Pol polyprotein (pol) of Feline leukemia virus.